Here is a 248-residue protein sequence, read N- to C-terminus: Protein G1-like6 (248 aa).

A compositionally biased stretch (basic residues) spans 1-15 (MDRHHHHHHHHHHHM). Disordered regions lie at residues 1 to 35 (MDRHHHHHHHHHHHMMSGGGQDPAAGDGGAGGATQ), 50 to 84 (GAGSSSSGAGTSAGGGGGGPSPSSSSPSLSRYESQ), and 198 to 248 (ARGI…FIIP). The segment covering 17-32 (SGGGQDPAAGDGGAGG) has biased composition (gly residues). Low complexity predominate over residues 50-59 (GAGSSSSGAG). Positions 60–69 (TSAGGGGGGP) are enriched in gly residues. The segment covering 70–79 (SPSSSSPSLS) has biased composition (low complexity). Positions 80–207 (RYESQKRRDW…ARGISYEKKK (128 aa)) constitute an ALOG domain. The short motif at 205 to 209 (KKKRK) is the Nuclear localization signal element. Composition is skewed to low complexity over residues 212-224 (SSAGAGAGPSSEG) and 239-248 (TSASPQFIIP).

This sequence belongs to the plant homeotic and developmental regulators ALOG protein family.

The protein localises to the nucleus. Probable transcription regulator that acts as a developmental regulator by promoting cell growth in response to light. This is Protein G1-like6 from Oryza sativa subsp. indica (Rice).